The primary structure comprises 378 residues: Succinyl-diaminopimelate desuccinylase (378 aa).

H68 serves as a coordination point for Zn(2+). The active site involves D70. D101 is a binding site for Zn(2+). Residue E135 is the Proton acceptor of the active site. Residues E136, E164, and H350 each contribute to the Zn(2+) site.

Belongs to the peptidase M20A family. DapE subfamily. In terms of assembly, homodimer. It depends on Zn(2+) as a cofactor. Co(2+) is required as a cofactor.

It carries out the reaction N-succinyl-(2S,6S)-2,6-diaminopimelate + H2O = (2S,6S)-2,6-diaminopimelate + succinate. Its pathway is amino-acid biosynthesis; L-lysine biosynthesis via DAP pathway; LL-2,6-diaminopimelate from (S)-tetrahydrodipicolinate (succinylase route): step 3/3. Catalyzes the hydrolysis of N-succinyl-L,L-diaminopimelic acid (SDAP), forming succinate and LL-2,6-diaminopimelate (DAP), an intermediate involved in the bacterial biosynthesis of lysine and meso-diaminopimelic acid, an essential component of bacterial cell walls. This is Succinyl-diaminopimelate desuccinylase from Vibrio parahaemolyticus serotype O3:K6 (strain RIMD 2210633).